The primary structure comprises 257 residues: Putative B3 domain-containing protein At2g27410 (257 aa).

The disordered stretch occupies residues Ala-5–Ser-50. Positions Thr-8–Thr-35 are enriched in polar residues. Positions Thr-115 to Asn-209 form a DNA-binding region, TF-B3. The tract at residues Arg-212–Ser-257 is disordered. Residues Ser-241–Ser-257 show a composition bias toward low complexity.

Its subcellular location is the nucleus. This chain is Putative B3 domain-containing protein At2g27410, found in Arabidopsis thaliana (Mouse-ear cress).